The primary structure comprises 216 residues: MSSQSSPISLTNNDLEISSNNNKPIIKQLPVPTNEIEKPVIQNIVATVELDCTINLQDVVRRVRNAEYNPKRFGALIIRITNPKTTALVFHSGKLVVTGGKTVDDSRLAGRKYARILQRLGYNVKFNHFKIQNVVASCDMKFAISLKELIQLAPKITKYEPEIFPGVVYRLADPKMVLLIFASGKIVFTGGKEIEQINKAFSEIYKILLQVANNDN.

Repeat copies occupy residues 38 to 121 (KPVI…QRLG) and 126 to 210 (FNHF…ILLQ).

This sequence belongs to the TBP family.

The protein resides in the nucleus. In terms of biological role, TATA box-binding transcription factor. Members of the TBP family are differentially required to regulate transcription and development during early embryogenesis. The chain is TATA-box-binding protein-like 1 (trf1) from Entamoeba histolytica (strain ATCC 30459 / HM-1:IMSS / ABRM).